The primary structure comprises 394 residues: Elongation factor Tu (394 aa).

In terms of domain architecture, tr-type G spans 10–204; that stretch reads KEHVNVGTIG…AVDTYIENPV (195 aa). A G1 region spans residues 19 to 26; that stretch reads GHVDHGKT. 19–26 provides a ligand contact to GTP; that stretch reads GHVDHGKT. T26 is a Mg(2+) binding site. Residues 60–64 are G2; sequence GITIN. The G3 stretch occupies residues 81–84; that stretch reads DCPG. GTP is bound by residues 81 to 85 and 136 to 139; these read DCPGH and NKCD. Positions 136–139 are G4; that stretch reads NKCD. A G5 region spans residues 174–176; that stretch reads SAL.

It belongs to the TRAFAC class translation factor GTPase superfamily. Classic translation factor GTPase family. EF-Tu/EF-1A subfamily. In terms of assembly, monomer.

The protein resides in the cytoplasm. The catalysed reaction is GTP + H2O = GDP + phosphate + H(+). In terms of biological role, GTP hydrolase that promotes the GTP-dependent binding of aminoacyl-tRNA to the A-site of ribosomes during protein biosynthesis. The polypeptide is Elongation factor Tu (Mycoplasmopsis synoviae (strain 53) (Mycoplasma synoviae)).